A 700-amino-acid polypeptide reads, in one-letter code: Calpain-2 catalytic subunit (700 aa).

At Ala2 the chain carries N-acetylalanine. A propeptide spans 2 to 19 (anchors to the small subunit); that stretch reads AGIAAKLAKDREAAEGLG. A Calpain catalytic domain is found at 45–344; that stretch reads LFQDPSFPAL…YSRLEICNLT (300 aa). 2 residues coordinate Ca(2+): Gly91 and Asp96. The active site involves Cys105. Ca(2+) contacts are provided by Glu175, Gln229, and Lys230. Active-site residues include His262 and Asn286. Ca(2+)-binding residues include Glu292, Asp299, and Glu323. Positions 345-514 are domain III; the sequence is PDTLTSDSYK…KKADYQVVDD (170 aa). Positions 515 to 529 are linker; sequence EIEANIDEIDISEDD. Positions 530 to 700 are domain IV; that stretch reads IDDGFRRLFA…LISWLSFSVL (171 aa). Residues Ala542, Asp545, Glu547, Glu552, Asp585, Asp587, Ser589, Lys591, Glu596, Asp615, Asp617, Ser619, Thr621, Glu626, Asp658, and Asn661 each contribute to the Ca(2+) site. EF-hand domains lie at 572–597, 602–637, and 652–672; these read FSIE…LKEF, TKIQ…AGFK, and DDDL…LETL.

The protein belongs to the peptidase C2 family. Forms a heterodimer with a small (regulatory) subunit (CAPNS1). Interacts with CPEB3; this leads to cleavage of CPEB3. The cofactor is Ca(2+). Ubiquitous.

It localises to the cytoplasm. It is found in the cell membrane. It carries out the reaction Broad endopeptidase specificity.. Activated by 200-1000 micromolar concentrations of calcium and inhibited by calpastatin. Its function is as follows. Calcium-regulated non-lysosomal thiol-protease which catalyzes limited proteolysis of substrates involved in cytoskeletal remodeling and signal transduction. Proteolytically cleaves MYOC at 'Arg-226'. Proteolytically cleaves CPEB3 following neuronal stimulation which abolishes CPEB3 translational repressor activity, leading to translation of CPEB3 target mRNAs. In Bos taurus (Bovine), this protein is Calpain-2 catalytic subunit (CAPN2).